Here is a 120-residue protein sequence, read N- to C-terminus: Large ribosomal subunit protein bL20 (120 aa).

It belongs to the bacterial ribosomal protein bL20 family.

Functionally, binds directly to 23S ribosomal RNA and is necessary for the in vitro assembly process of the 50S ribosomal subunit. It is not involved in the protein synthesizing functions of that subunit. In Cereibacter sphaeroides (strain ATCC 17025 / ATH 2.4.3) (Rhodobacter sphaeroides), this protein is Large ribosomal subunit protein bL20.